Reading from the N-terminus, the 438-residue chain is tRNA-2-methylthio-N(6)-dimethylallyladenosine synthase (438 aa).

Residues 4–120 (KKLYIDTVGC…VPEMVKDAEA (117 aa)) form the MTTase N-terminal domain. [4Fe-4S] cluster is bound by residues cysteine 13, cysteine 49, cysteine 83, cysteine 158, cysteine 162, and cysteine 165. One can recognise a Radical SAM core domain in the interval 144–377 (GRKRVSAFVT…QAVHSRIHNE (234 aa)). The 62-residue stretch at 377 to 438 (ETYVGSTQQV…YANSLLGELL (62 aa)) folds into the TRAM domain.

This sequence belongs to the methylthiotransferase family. MiaB subfamily. In terms of assembly, monomer. Requires [4Fe-4S] cluster as cofactor.

Its subcellular location is the cytoplasm. It catalyses the reaction N(6)-dimethylallyladenosine(37) in tRNA + (sulfur carrier)-SH + AH2 + 2 S-adenosyl-L-methionine = 2-methylsulfanyl-N(6)-dimethylallyladenosine(37) in tRNA + (sulfur carrier)-H + 5'-deoxyadenosine + L-methionine + A + S-adenosyl-L-homocysteine + 2 H(+). Catalyzes the methylthiolation of N6-(dimethylallyl)adenosine (i(6)A), leading to the formation of 2-methylthio-N6-(dimethylallyl)adenosine (ms(2)i(6)A) at position 37 in tRNAs that read codons beginning with uridine. In Trichlorobacter lovleyi (strain ATCC BAA-1151 / DSM 17278 / SZ) (Geobacter lovleyi), this protein is tRNA-2-methylthio-N(6)-dimethylallyladenosine synthase.